We begin with the raw amino-acid sequence, 382 residues long: Mannan endo-1,4-beta-mannosidase (382 aa).

The first 19 residues, 1–19 (MVKLFSFLLLVWVASPAFS), serve as a signal peptide directing secretion. Substrate contacts are provided by residues W83, N144, 147–151 (WDESK), and N180. The active-site Proton donor/acceptor is the E181. Residues Q187, Q204, W208, W243, Y282, and H284 each contribute to the substrate site. The cysteines at positions 195 and 262 are disulfide-linked. E312 (nucleophile) is an active-site residue. The cysteines at positions 317 and 349 are disulfide-linked. Positions 341 and 348 each coordinate substrate. The interval 346–350 (GGDCS) is involved in stabilization of the transition state.

The protein belongs to the glycosyl hydrolase 5 (cellulase A) family. In terms of assembly, monomer.

The protein resides in the secreted. The catalysed reaction is Random hydrolysis of (1-&gt;4)-beta-D-mannosidic linkages in mannans, galactomannans and glucomannans.. With respect to regulation, activated particularly by Ca(2+) and Zn(2+), and to a lesser extent by Na(+), K(+), Mg(2+) and Cu(2+). Activation effect of the divalent metal ions Ca(2+), Zn(2+), Mg(2+) and Cu(2+) is reduced significantly by the addition of EDTA. Strongly inhibited by Mn(2+), Hg(2+) and Ag(+). Hydrolyzes 1,4-beta linked polysaccharide backbones of mannans. Has high activity toward locust bean gum. Also active toward konjac and beta-1,4-mannan. Hydrolyzes mannotetraose (M4) and mannopentaose (M5) to mannobiose (M2) and mannotriose (M3) with a little production of mannose (M1). Hydrolyzes beta-1,4-mannan to M2, M3 and M4. Hardly hydrolyzes M2 and M3. Does not hydrolyze p-nitrophenyl-beta-D-mannopyranoside, gua-gum, carboxymethyl cellulose, soluble starch or laminarin. This Cryptopygus antarcticus (Antarctic springtail) protein is Mannan endo-1,4-beta-mannosidase.